The primary structure comprises 581 residues: Arginine--tRNA ligase (581 aa).

The 'HIGH' region signature appears at A131–H141.

This sequence belongs to the class-I aminoacyl-tRNA synthetase family. Monomer.

The protein resides in the cytoplasm. It catalyses the reaction tRNA(Arg) + L-arginine + ATP = L-arginyl-tRNA(Arg) + AMP + diphosphate. The sequence is that of Arginine--tRNA ligase from Ruegeria pomeroyi (strain ATCC 700808 / DSM 15171 / DSS-3) (Silicibacter pomeroyi).